Here is a 235-residue protein sequence, read N- to C-terminus: Carboxy-S-adenosyl-L-methionine synthase (235 aa).

S-adenosyl-L-methionine-binding positions include Y35, 60 to 62, 83 to 84, N124, and R191; these read GCS and DN.

It belongs to the class I-like SAM-binding methyltransferase superfamily. Cx-SAM synthase family. In terms of assembly, homodimer.

The catalysed reaction is prephenate + S-adenosyl-L-methionine = carboxy-S-adenosyl-L-methionine + 3-phenylpyruvate + H2O. Its function is as follows. Catalyzes the conversion of S-adenosyl-L-methionine (SAM) to carboxy-S-adenosyl-L-methionine (Cx-SAM). The chain is Carboxy-S-adenosyl-L-methionine synthase from Campylobacter jejuni subsp. jejuni serotype O:23/36 (strain 81-176).